The sequence spans 3498 residues: Mediator of RNA polymerase II transcription subunit 12 (3498 aa).

Disordered stretches follow at residues 365–456, 497–764, 2209–2576, 2589–2620, 2637–2889, and 2917–3498; these read IKQH…HTDI, GGVG…EPEK, AKKR…AYMK, ENNRIMEEQQREREMEAARKEAARRAAEEAYA, LRKE…KEKQ, and NVAG…PNQY. Positions 368–394 are enriched in basic residues; that stretch reads HEKRKAGSLKKSERRRRRGLSKNRPKK. Basic and acidic residues predominate over residues 404–416; that stretch reads SLDHDKVQIKQEP. Polar residues-rich tracts occupy residues 424 to 440 and 512 to 536; these read GQQSDNSMDYDSFSHQY and SNPTPTETVNTQPQIDFESSPSASP. Positions 539 to 570 form a coiled coil; it reads SVDKENECEKKEDESKTKEKNKDKEKDKEKEK. 2 stretches are compositionally biased toward basic and acidic residues: residues 540 to 578 and 593 to 614; these read VDKENECEKKEDESKTKEKNKDKEKDKEKEKSVDEHTND and ANDKTDASEKQKLVEEEPTGKE. Low complexity predominate over residues 621–630; sequence SKTAKTSTSA. Composition is skewed to basic and acidic residues over residues 691–719, 738–764, and 2209–2285; these read EVDKAPEVDKSEKEHEDDIMIIESNKKAD, ESEKKKDGEEERDKNKDTDVADNEPEK, and AKKR…KRAS. A required for nuclear localization region spans residues 2142 to 3498; that stretch reads QTTRLDKVAK…YPNQQPPNQY (1357 aa). Positions 2203–2290 form a coiled coil; sequence VIDEEEAKKR…EKRASDAAAA (88 aa). Composition is skewed to low complexity over residues 2342–2360 and 2409–2431; these read RADTAQAAAATTQWNAPIA and LADASAAAAAANSNAMGNTSSMP. A coiled-coil region spans residues 2395 to 2420; the sequence is RNLLNRKKEEKRNSLADASAAAAAAN. A compositionally biased stretch (polar residues) spans 2444 to 2456; that stretch reads QSAGATQQLQGMQ. Residues 2459-2479 show a composition bias toward low complexity; it reads QMGGSMSGMNQNMGGMNQSMS. Residues 2514-2530 show a composition bias toward polar residues; sequence NRSSGPVSSETRQQIME. Composition is skewed to basic and acidic residues over residues 2547–2576, 2589–2616, and 2637–2724; these read QKQRDAREREAREREAREHQERMQREAYMK, ENNRIMEEQQREREMEAARKEAARRAAE, and LRKE…EQQR. The segment covering 2725 to 2770 has biased composition (low complexity); it reads RSQQNPYMNQQGQYSQQPPPSYQQSSYPNNYQPGQQGNQPPNYQQP. Positions 2771-2783 are enriched in polar residues; that stretch reads SHQSMQQGHQAGY. The segment covering 2784–2810 has biased composition (low complexity); it reads QQTSNQMQMNMQQQQNRQQGGPQQSFS. Polar residues-rich tracts occupy residues 2816–2827, 2842–2852, 2868–2881, and 2926–2956; these read NQPSQPGYSGYN, RNPFGNQQDMQ, HAQQYQHTQNQLSL, and GQQQLGASDQMGTSQLPGASTSRMNQGSSNP. A compositionally biased stretch (low complexity) spans 2957-2993; sequence QGGMQSYQQQQPVLGQPGPIQTGQSTQQQIPAQSQQQ. Over residues 2994 to 3009 the composition is skewed to polar residues; that stretch reads YNSGRPQMHTTPTKND. Positions 3039–3100 are enriched in low complexity; the sequence is GQNVPGGYQQ…NVSQSQSAAQ (62 aa). Polar residues predominate over residues 3103-3127; it reads RPSQDSAYQQSGYNQTGNQSYQRPD. Low complexity-rich tracts occupy residues 3128–3184 and 3192–3223; these read QQQQ…SAQY and QGYDQQQQGQIAPQQAQNPQASQSYGQQQTQQ. The span at 3231–3253 shows a compositional bias: polar residues; that stretch reads SGYTANSGGSSNILNQSMEESGL. A compositionally biased stretch (low complexity) spans 3254-3311; it reads NQGFSGASSNASSQQGGSSQMQQSGYGMPGNQMQMQQNQKQQVQRGMPTGMGQTNMGQ. A compositionally biased stretch (gly residues) spans 3312–3321; it reads SGMGQSGMGQ. Composition is skewed to low complexity over residues 3336 to 3356 and 3370 to 3408; these read QGQQSQQPQQPQVSQQQNQRG and QQQHQPQQSQISQQQQQQDQYRRMQAAQMQQQPTAQGQQ. Positions 3414–3425 are enriched in polar residues; it reads PSQQQSGAAYSN. Residues 3426 to 3436 are compositionally biased toward low complexity; it reads QMQFQGVRQGQ. The segment covering 3437-3446 has biased composition (gly residues); it reads QGMGGMGGSG. Residues 3447 to 3498 show a composition bias toward low complexity; it reads QQQPQTQPHGSNQYYQQQQDQRMQQQPQQPGQQQQHGYGMGQYPNQQPPNQY.

It belongs to the Mediator complex subunit 12 family. As to quaternary structure, component of the Mediator complex. In terms of tissue distribution, ubiquitously expressed.

The protein localises to the nucleus. Its function is as follows. Component of the Mediator complex, a coactivator involved in regulated gene transcription of nearly all RNA polymerase II-dependent genes. Mediator functions as a bridge to convey information from gene-specific regulatory proteins to the basal RNA polymerase II transcription machinery. Mediator is recruited to promoters by direct interactions with regulatory proteins and serves as a scaffold for the assembly of a functional preinitiation complex with RNA polymerase II and the general transcription factors. Functions downstream of let-60 during vulval induction. Required for asymmetric division of T-cells and for hypodermal development. This Caenorhabditis elegans protein is Mediator of RNA polymerase II transcription subunit 12 (dpy-22).